A 106-amino-acid polypeptide reads, in one-letter code: UPF0145 protein Fphi_1781 (106 aa).

Belongs to the UPF0145 family.

The polypeptide is UPF0145 protein Fphi_1781 (Francisella philomiragia subsp. philomiragia (strain ATCC 25017 / CCUG 19701 / FSC 153 / O#319-036)).